Here is a 194-residue protein sequence, read N- to C-terminus: MTENSTSTPAAKPKRAKASKKSTDHPKYSDMIVAAIQAEKNRAGSSRQSIQKYIKSHYKVGENADSQIKLSIKRLVTTGVLKQTKGVGASGSFRLAKSDEPKRSVAFKKTKKEVKKVATPKKAAKPKKAASKAPSKKPKATPVKKAKKKPAATPKKTKKPKTVKAKPVKASKPKKTKPVKPKAKSSAKRTGKKK.

Met-1 is modified (N-acetylmethionine). The span at 1-11 shows a compositional bias: low complexity; it reads MTENSTSTPAA. The interval 1-29 is disordered; sequence MTENSTSTPAAKPKRAKASKKSTDHPKYS. Residue Thr-2 is modified to N-acetylthreonine; in Histone H1.0, N-terminally processed. Residues 24–97 enclose the H15 domain; sequence DHPKYSDMIV…GASGSFRLAK (74 aa). At Arg-42 the chain carries Citrulline. The interval 83 to 194 is disordered; that stretch reads QTKGVGASGS…SSAKRTGKKK (112 aa). Position 104 is an ADP-ribosylserine (Ser-104). Residues 105-194 show a composition bias toward basic residues; sequence VAFKKTKKEV…SSAKRTGKKK (90 aa).

This sequence belongs to the histone H1/H5 family. Post-translationally, ADP-ribosylated on Ser-104 in response to DNA damage.

It localises to the nucleus. The protein localises to the chromosome. Functionally, histones H1 are necessary for the condensation of nucleosome chains into higher-order structures. The histones H1.0 are found in cells that are in terminal stages of differentiation or that have low rates of cell division. The sequence is that of Histone H1.0 (H1-0) from Bos taurus (Bovine).